Reading from the N-terminus, the 116-residue chain is Protein AV2 (116 aa).

Belongs to the geminiviridae protein AV2/V2 family. As to quaternary structure, interacts with host SGS3.

It localises to the host cytoplasm. The protein localises to the host perinuclear region. Through its interaction with host SGS3, acts as a suppressor of RNA-mediated gene silencing, also known as post-transcriptional gene silencing (PTGS), a mechanism of plant viral defense that limits the accumulation of viral RNAs. The chain is Protein AV2 from Mungbean yellow mosaic virus (strain Vigna) (MYMV).